The sequence spans 963 residues: Thrombospondin-4 (963 aa).

A signal peptide spans 1 to 26 (MPAPRAAAAAFLLLHLVLQPWQRTSA). Residues 29-194 (TPQVFDLLPS…LEELKLVVRG (166 aa)) enclose the Laminin G-like domain. Positions 138 to 140 (RGD) match the Cell attachment site motif. Positions 288–327 (PTRHCDSSPCFRGVRCTDTRDGFQCGPCPDGYTGNGITCS) constitute an EGF-like 1 domain. Cystine bridges form between Cys292-Cys303, Cys297-Cys312, Cys315-Cys326, Cys332-Cys343, Cys337-Cys352, Cys355-Cys379, Cys385-Cys396, Cys390-Cys405, Cys408-Cys420, Cys426-Cys440, Cys434-Cys450, Cys452-Cys463, Cys479-Cys484, Cys489-Cys509, Cys525-Cys545, Cys548-Cys568, Cys584-Cys604, Cys607-Cys627, Cys645-Cys665, Cys685-Cys705, and Cys721-Cys942. In terms of domain architecture, EGF-like 2; calcium-binding spans 328–365 (DVDECKYHPCYPGVRCVNLAPGFRCDACPVGFTGPMVQ). The EGF-like 3; calcium-binding domain maps to 381–418 (DVDECQNGACVLNSICINTLGSYRCGPCKPGYTGDQTR). In terms of domain architecture, EGF-like 4 spans 422–464 (TERSCRNPEQNPCSVHAQCIEERQGDVTCVCGVGWAGDGYVCG). TSP type-3 repeat units lie at residues 465 to 497 (KDVD…NSGQ), 498 to 533 (EDAD…NIDQ), 534 to 556 (RNSD…NNDQ), 557 to 592 (KDTD…NRDQ), 593 to 615 (QDRD…NPNQ), 616 to 653 (SDVD…NSSQ), 654 to 693 (LDTD…NPAQ), and 694 to 729 (EDSN…EITL). Residues 564 to 566 (RGD) carry the Cell attachment site motif. The interval 579–676 (NILDNCPRVP…DDDDNDGIPD (98 aa)) is disordered. N-linked (GlcNAc...) asparagine glycosylation is found at Asn614 and Asn650. Residues 642–654 (TDNCPTVINSSQL) show a composition bias toward polar residues. A compositionally biased stretch (acidic residues) spans 662-673 (GDECDDDDDNDG). The TSP C-terminal domain occupies 733 to 947 (RAYQTVVLDP…LKYRCNDTIP (215 aa)). Asn943 is a glycosylation site (N-linked (GlcNAc...) asparagine).

Belongs to the thrombospondin family. In terms of assembly, homopentamer; disulfide-linked. Interacts with PTBP3. Interacts (via EGF-like 3; calcium-binding domain) with ATF6 and facilitates its processing, activation and nuclear translocation. Interacts with NOTCH1. Heart. Up-regulated in the heart in response to ischemic injury and pathology (at protein level). Astrocytes; expressed at high levels in subventricular zone (SVZ)-derived astrocytes and at low levels in cortical astrocytes. In response to peripheral nerve injury, significantly up-regulated in the dorsal spinal cord (at protein level).

Its subcellular location is the endoplasmic reticulum. The protein localises to the sarcoplasmic reticulum. It is found in the secreted. It localises to the extracellular space. The protein resides in the extracellular matrix. Functionally, adhesive glycoprotein that mediates cell-to-cell and cell-to-matrix interactions and is involved in various processes including cellular proliferation, migration, adhesion and attachment, inflammatory response to CNS injury, regulation of vascular inflammation and adaptive responses of the heart to pressure overload and in myocardial function and remodeling. Binds to structural extracellular matrix (ECM) proteins and modulates the ECM in response to tissue damage, contributing to cardioprotective and adaptive ECM remodeling. Plays a role in ER stress response, via its interaction with the activating transcription factor 6 alpha (ATF6) which produces adaptive ER stress response factors and protects myocardium from pressure overload. May contribute to spinal presynaptic hypersensitivity and neuropathic pain states after peripheral nerve injury. May play a role in regulating protective astrogenesis from the subventricular zone (SVZ) niche after injury in a NOTCH1-dependent manner. This Mus musculus (Mouse) protein is Thrombospondin-4 (Thbs4).